Reading from the N-terminus, the 373-residue chain is Secondary metabolism regulator laeA (373 aa).

Residues 55-81 (ERDPAAGRWHANGSPSINSTSSKNPDR) form a disordered region. Residues 67-77 (GSPSINSTSSK) are compositionally biased toward polar residues.

The protein belongs to the methyltransferase superfamily. LaeA methyltransferase family. In terms of assembly, component of the heterotrimeric velvet complex composed of laeA, veA and velB; VeA acting as a bridging protein between laeA and velB.

It is found in the nucleus. The catalysed reaction is L-methionyl-[protein] + S-adenosyl-L-methionine = S-methyl-L-methionyl-[protein] + S-adenosyl-L-homocysteine. Methyltransferase that performs automethylation. No other methyl-accepting substrate has been identified yet. Component of the velvet transcription factor complex that acts as a global regulator for secondary metabolite gene expression. Positively controls expression of 20% to 40% of major classes of secondary metabolite biosynthesis genes such as nonribosomal peptide synthetases, polyketide synthases, and P450 monooxygenases. Controls the expression of the gliotoxin gene cluster. Controls the expression of the fumitremorgin, fumagillin, and pseurotin gene clusters, where genes for fumagillin and pseurotin are physically intertwined in a single supercluster. Regulates the biosynthetic genes required for endocrocin production. Secondary metabolites under the transcriptional regulation of laeA are necessary for inhibition of angiogenesis during invasive infection in mice. Controls the expression of cell surface rodA, a hydrophobin that acts as an antiphagocytic molecule. Also regulates the expression of genes involved in conidial biosynthesis. The sequence is that of Secondary metabolism regulator laeA from Aspergillus fumigatus (strain ATCC MYA-4609 / CBS 101355 / FGSC A1100 / Af293) (Neosartorya fumigata).